The following is a 385-amino-acid chain: Spindle pole component BBP1 (385 aa).

Residue Ser29 is modified to Phosphoserine. A compositionally biased stretch (basic and acidic residues) spans 34–48 (YKDQEERRDRSRYAQ). The interval 34–76 (YKDQEERRDRSRYAQDDTNFSMKFGNDSNRRSTNLSRSNSWSG) is disordered. The segment covering 64 to 75 (RSTNLSRSNSWS) has biased composition (low complexity). Phosphoserine is present on residues Ser73 and Ser115. Positions 229 to 355 (QMDLNSRDLE…KDMQRDNYES (127 aa)) form a coiled coil.

The protein belongs to the BBP1 family. Homodimer. Interacts with KAR1, MPS2 and SPC29.

It is found in the cytoplasm. The protein localises to the cytoskeleton. The protein resides in the microtubule organizing center. Its subcellular location is the spindle pole body. In terms of biological role, component of the spindle pole body (SPB) required for insertion of the nascent SPB into the nuclear envelope and for the proper execution of spindle pole body (SPB) duplication. Connects the central plaque of the SPB with the half-bridge. Required for proper localization of CDC5 at the SPB and for proper M-phase progression. The chain is Spindle pole component BBP1 (BBP1) from Saccharomyces cerevisiae (strain ATCC 204508 / S288c) (Baker's yeast).